The chain runs to 80 residues: Acyl carrier protein (80 aa).

In terms of domain architecture, Carrier spans 4 to 79; it reads ANVEQKVKNI…DAVNYITTHK (76 aa). Position 39 is an O-(pantetheine 4'-phosphoryl)serine (S39).

It belongs to the acyl carrier protein (ACP) family. In terms of processing, 4'-phosphopantetheine is transferred from CoA to a specific serine of apo-ACP by AcpS. This modification is essential for activity because fatty acids are bound in thioester linkage to the sulfhydryl of the prosthetic group.

It is found in the cytoplasm. It functions in the pathway lipid metabolism; fatty acid biosynthesis. In terms of biological role, carrier of the growing fatty acid chain in fatty acid biosynthesis. In Anaeromyxobacter sp. (strain Fw109-5), this protein is Acyl carrier protein.